The following is a 990-amino-acid chain: Pentatricopeptide repeat-containing protein At4g33170 (990 aa).

PPR repeat units follow at residues Glu-73–Ser-107, Asn-109–Asp-139, Ser-144–Gly-178, Asp-179–Arg-209, Asp-210–Pro-244, Glu-279–Cys-313, Asp-314–Leu-348, Met-349–Arg-379, Asp-380–Pro-414, Asp-415–Ser-450, Asp-451–Arg-477, Asp-481–Ser-515, Asp-516–Leu-550, Asp-551–Pro-581, Asp-582–Pro-616, Asp-617–Asn-651, Asp-652–Met-682, Asn-683–Pro-717, Asp-718–Pro-753, and Glu-754–Ser-788. The tract at residues Met-789 to Lys-864 is type E motif. The type E(+) motif stretch occupies residues Asn-865–Lys-895. Residues Gln-896–Trp-990 are type DYW motif.

The protein belongs to the PPR family. PCMP-H subfamily.

The protein is Pentatricopeptide repeat-containing protein At4g33170 (PCMP-H53) of Arabidopsis thaliana (Mouse-ear cress).